Here is a 93-residue protein sequence, read N- to C-terminus: NAD(P)H-quinone oxidoreductase subunit 4L, chloroplastic (93 aa).

The next 2 membrane-spanning stretches (helical) occupy residues 1-21 (MLEH…SGLI) and 60-80 (IFAI…LSIA).

Belongs to the complex I subunit 4L family. In terms of assembly, NDH is composed of at least 16 different subunits, 5 of which are encoded in the nucleus.

It is found in the plastid. The protein localises to the chloroplast thylakoid membrane. It carries out the reaction a plastoquinone + NADH + (n+1) H(+)(in) = a plastoquinol + NAD(+) + n H(+)(out). It catalyses the reaction a plastoquinone + NADPH + (n+1) H(+)(in) = a plastoquinol + NADP(+) + n H(+)(out). In terms of biological role, NDH shuttles electrons from NAD(P)H:plastoquinone, via FMN and iron-sulfur (Fe-S) centers, to quinones in the photosynthetic chain and possibly in a chloroplast respiratory chain. The immediate electron acceptor for the enzyme in this species is believed to be plastoquinone. Couples the redox reaction to proton translocation, and thus conserves the redox energy in a proton gradient. The polypeptide is NAD(P)H-quinone oxidoreductase subunit 4L, chloroplastic (Anthoceros angustus (Hornwort)).